We begin with the raw amino-acid sequence, 213 residues long: Kynurenine formamidase (213 aa).

W15 is a binding site for substrate. The Zn(2+) site is built by H45, H49, and D51. H55 acts as the Proton donor/acceptor in catalysis. H157 and E169 together coordinate Zn(2+).

It belongs to the Cyclase 1 superfamily. KynB family. In terms of assembly, homodimer. Zn(2+) is required as a cofactor.

It catalyses the reaction N-formyl-L-kynurenine + H2O = L-kynurenine + formate + H(+). It participates in amino-acid degradation; L-tryptophan degradation via kynurenine pathway; L-kynurenine from L-tryptophan: step 2/2. Its function is as follows. Catalyzes the hydrolysis of N-formyl-L-kynurenine to L-kynurenine, the second step in the kynurenine pathway of tryptophan degradation. The sequence is that of Kynurenine formamidase from Deinococcus geothermalis (strain DSM 11300 / CIP 105573 / AG-3a).